Reading from the N-terminus, the 207-residue chain is Transcriptional regulatory protein RcsA (207 aa).

In terms of domain architecture, HTH luxR-type spans 131–196; it reads INLPTLSLSR…VIYHVVRLTD (66 aa). Residues 155 to 174 constitute a DNA-binding region (H-T-H motif); that stretch reads TIQISDRMNIKAKTVSSHKG.

This sequence belongs to the RcsA family. Interacts with RcsB.

Functionally, component of the Rcs signaling system, which controls transcription of numerous genes. Binds, with RcsB, to the RcsAB box to regulate expression of genes. The chain is Transcriptional regulatory protein RcsA from Salmonella typhi.